A 257-amino-acid chain; its full sequence is 3-deoxy-manno-octulosonate cytidylyltransferase (257 aa).

It belongs to the KdsB family.

It is found in the cytoplasm. The catalysed reaction is 3-deoxy-alpha-D-manno-oct-2-ulosonate + CTP = CMP-3-deoxy-beta-D-manno-octulosonate + diphosphate. The protein operates within nucleotide-sugar biosynthesis; CMP-3-deoxy-D-manno-octulosonate biosynthesis; CMP-3-deoxy-D-manno-octulosonate from 3-deoxy-D-manno-octulosonate and CTP: step 1/1. Its pathway is bacterial outer membrane biogenesis; lipopolysaccharide biosynthesis. In terms of biological role, activates KDO (a required 8-carbon sugar) for incorporation into bacterial lipopolysaccharide in Gram-negative bacteria. This Xylella fastidiosa (strain M12) protein is 3-deoxy-manno-octulosonate cytidylyltransferase.